Here is a 149-residue protein sequence, read N- to C-terminus: D-aminoacyl-tRNA deacylase (149 aa).

The Gly-cisPro motif, important for rejection of L-amino acids signature appears at 137-138 (GP).

The protein belongs to the DTD family. In terms of assembly, homodimer.

Its subcellular location is the cytoplasm. The catalysed reaction is glycyl-tRNA(Ala) + H2O = tRNA(Ala) + glycine + H(+). It catalyses the reaction a D-aminoacyl-tRNA + H2O = a tRNA + a D-alpha-amino acid + H(+). Its function is as follows. An aminoacyl-tRNA editing enzyme that deacylates mischarged D-aminoacyl-tRNAs. Also deacylates mischarged glycyl-tRNA(Ala), protecting cells against glycine mischarging by AlaRS. Acts via tRNA-based rather than protein-based catalysis; rejects L-amino acids rather than detecting D-amino acids in the active site. By recycling D-aminoacyl-tRNA to D-amino acids and free tRNA molecules, this enzyme counteracts the toxicity associated with the formation of D-aminoacyl-tRNA entities in vivo and helps enforce protein L-homochirality. In Clostridium botulinum (strain 657 / Type Ba4), this protein is D-aminoacyl-tRNA deacylase.